A 115-amino-acid polypeptide reads, in one-letter code: Large ribosomal subunit protein P2 (115 aa).

N-acetylmethionine is present on Met1. The residue at position 19 (Ser19) is a Phosphoserine. Lys21 is modified (N6-acetyllysine; alternate). Lys21 carries the post-translational modification N6-succinyllysine; alternate. Over residues 76 to 90 (APGSAAPAAGSAPAA) the composition is skewed to low complexity. A disordered region spans residues 76–115 (APGSAAPAAGSAPAAAEEKKDEKKEESEESDDDMGFGLFD). A phosphoserine mark is found at Ser79 and Ser86. The span at 91–101 (AEEKKDEKKEE) shows a compositional bias: basic and acidic residues. Ser102 and Ser105 each carry phosphoserine.

Belongs to the eukaryotic ribosomal protein P1/P2 family. As to quaternary structure, heterodimer with RPLP1 at the lateral ribosomal stalk of the large ribosomal subunit.

Functionally, plays an important role in the elongation step of protein synthesis. The sequence is that of Large ribosomal subunit protein P2 (Rplp2) from Rattus norvegicus (Rat).